The primary structure comprises 444 residues: MVRDIVDDPLDEDDIALVKTYGLVPYSAPIKKVEKEIKELTEKINDLCGIKESDTGLAPLSKQMMQEGQPLQVGYVSCFRYIPIDLLMDIFSRVPAKSIARFRCVSKLWESILCRPDFKELFMTMSSIRPPLLLFTFQDDDGNLFFFSSPHPQIPCNENTSLVPTRYHVQHTTDSFSEIGSPLCGFICRRGKRNLDTMVICNPVTGESVSLPKVELKSINTETRPYLGYDPVRKQLKVLCIKSDDIPNTCDEHQVLTLENGNHLWRTIQCKPHYPKSDGICIDGILYYTAGFDMRARVSMVVCFDVRSEKFSFINIHVFMLMNDSCTLINYKGKLGALQFTCLSPKRLRFWVLVNAEKNIWTKCIYALPPLWNNLVQHTELAIVGMTDGGEVVLSQYCLIYAFYIYYFNLESKSLTRVQIQDVEMFKRTRVYTSLGYVENFKLM.

The F-box domain maps to 76–125 (VSCFRYIPIDLLMDIFSRVPAKSIARFRCVSKLWESILCRPDFKELFMTM).

This is F-box protein At1g53790 from Arabidopsis thaliana (Mouse-ear cress).